A 400-amino-acid chain; its full sequence is Formate-dependent phosphoribosylglycinamide formyltransferase (400 aa).

N(1)-(5-phospho-beta-D-ribosyl)glycinamide-binding positions include Glu-21–Leu-22 and Glu-81. ATP is bound by residues Arg-114, Lys-155, Ser-160 to Gln-165, Glu-195 to Ile-198, and Glu-203. The region spanning Arg-119–Leu-313 is the ATP-grasp domain. 2 residues coordinate Mg(2+): Glu-272 and Glu-284. N(1)-(5-phospho-beta-D-ribosyl)glycinamide is bound by residues Asp-291, Lys-360, and Arg-367 to Arg-368.

Belongs to the PurK/PurT family. As to quaternary structure, homodimer.

The catalysed reaction is N(1)-(5-phospho-beta-D-ribosyl)glycinamide + formate + ATP = N(2)-formyl-N(1)-(5-phospho-beta-D-ribosyl)glycinamide + ADP + phosphate + H(+). It participates in purine metabolism; IMP biosynthesis via de novo pathway; N(2)-formyl-N(1)-(5-phospho-D-ribosyl)glycinamide from N(1)-(5-phospho-D-ribosyl)glycinamide (formate route): step 1/1. Functionally, involved in the de novo purine biosynthesis. Catalyzes the transfer of formate to 5-phospho-ribosyl-glycinamide (GAR), producing 5-phospho-ribosyl-N-formylglycinamide (FGAR). Formate is provided by PurU via hydrolysis of 10-formyl-tetrahydrofolate. The protein is Formate-dependent phosphoribosylglycinamide formyltransferase of Methylococcus capsulatus (strain ATCC 33009 / NCIMB 11132 / Bath).